Consider the following 382-residue polypeptide: Pregnancy-associated glycoprotein 1 (382 aa).

A signal peptide spans 1–15 (MKWLVLLGLVAFSEC). Residues 16–53 (IVKIPLRRVKTMRNTLSGKKMLNSFLKEHAYRLSQISF) constitute a propeptide, activation peptide. Asparagine 57 and asparagine 74 each carry an N-linked (GlcNAc...) asparagine glycan. In terms of domain architecture, Peptidase A1 spans 71 to 379 (YVGNITIGTP…DRGNDRIGLA (309 aa)). Cysteine 102 and cysteine 110 form a disulfide bridge. Asparagine 128 carries N-linked (GlcNAc...) asparagine glycosylation. 2 disulfide bridges follow: cysteine 263/cysteine 267 and cysteine 305/cysteine 339.

It belongs to the peptidase A1 family. As to expression, trophoblast and placental tissue. Produced specifically in the invasive binucleate cells of the placenta.

It localises to the secreted. It is found in the extracellular space. Its function is as follows. Has no proteolytic activity. This chain is Pregnancy-associated glycoprotein 1, found in Ovis aries (Sheep).